The following is a 306-amino-acid chain: UDP-3-O-acyl-N-acetylglucosamine deacetylase (306 aa).

3 residues coordinate Zn(2+): His-79, His-239, and Asp-243. His-266 serves as the catalytic Proton donor.

Belongs to the LpxC family. Zn(2+) is required as a cofactor.

It catalyses the reaction a UDP-3-O-[(3R)-3-hydroxyacyl]-N-acetyl-alpha-D-glucosamine + H2O = a UDP-3-O-[(3R)-3-hydroxyacyl]-alpha-D-glucosamine + acetate. It functions in the pathway glycolipid biosynthesis; lipid IV(A) biosynthesis; lipid IV(A) from (3R)-3-hydroxytetradecanoyl-[acyl-carrier-protein] and UDP-N-acetyl-alpha-D-glucosamine: step 2/6. In terms of biological role, catalyzes the hydrolysis of UDP-3-O-myristoyl-N-acetylglucosamine to form UDP-3-O-myristoylglucosamine and acetate, the committed step in lipid A biosynthesis. The polypeptide is UDP-3-O-acyl-N-acetylglucosamine deacetylase (Actinobacillus pleuropneumoniae serotype 7 (strain AP76)).